A 652-amino-acid polypeptide reads, in one-letter code: UvrABC system protein C (652 aa).

Residues 37–116 (KSSGCYLFKD…IKTNKPYFNI (80 aa)) enclose the GIY-YIG domain. One can recognise a UVR domain in the interval 226-261 (DDLEIFLQKKMLQFSNDLDYENAAKIRDQISGLKLL).

Belongs to the UvrC family. Interacts with UvrB in an incision complex.

The protein localises to the cytoplasm. Its function is as follows. The UvrABC repair system catalyzes the recognition and processing of DNA lesions. UvrC both incises the 5' and 3' sides of the lesion. The N-terminal half is responsible for the 3' incision and the C-terminal half is responsible for the 5' incision. The sequence is that of UvrABC system protein C from Prochlorococcus marinus (strain MIT 9312).